Here is a 177-residue protein sequence, read N- to C-terminus: Large ribosomal subunit protein uL6 (177 aa).

Belongs to the universal ribosomal protein uL6 family. In terms of assembly, part of the 50S ribosomal subunit.

In terms of biological role, this protein binds to the 23S rRNA, and is important in its secondary structure. It is located near the subunit interface in the base of the L7/L12 stalk, and near the tRNA binding site of the peptidyltransferase center. The polypeptide is Large ribosomal subunit protein uL6 (Edwardsiella ictaluri (strain 93-146)).